The following is a 203-amino-acid chain: E3 ubiquitin-protein ligase rnf152-B (203 aa).

Residues 12 to 55 (CQICFNYYSPRRRPKLLDCKHTCCSVCLQQMRASQKDLRCPWCR) form an RING-type zinc finger. The chain crosses the membrane as a helical span at residues 167-187 (SGVCTVILVACVLVFLLGIVL).

This sequence belongs to the RNF152 family.

Its subcellular location is the lysosome membrane. The catalysed reaction is S-ubiquitinyl-[E2 ubiquitin-conjugating enzyme]-L-cysteine + [acceptor protein]-L-lysine = [E2 ubiquitin-conjugating enzyme]-L-cysteine + N(6)-ubiquitinyl-[acceptor protein]-L-lysine.. Its pathway is protein modification; protein ubiquitination. In terms of biological role, E3 ubiquitin-protein ligase that acts as a negative regulator of mTORC1 signaling by mediating ubiquitination of RagA/RRAGA and RHEB. Catalyzes 'Lys-63'-linked polyubiquitination of RagA/RRAGA in response to amino acid starvation, thereby regulating mTORC1 signaling. Also mediates monoubiquitination of RHEB, promoting its association with the TSC-TBC complex and subsequent inhibition. Also mediates 'Lys-48'-linked polyubiquitination of target proteins and their subsequent targeting to the proteasome for degradation. The sequence is that of E3 ubiquitin-protein ligase rnf152-B from Xenopus laevis (African clawed frog).